Here is a 211-residue protein sequence, read N- to C-terminus: MISYYFQGFALGAAMILPLGPQNAFVMNQGIRRQYHLMIALLCALSDLVLISAGIFGGSALLMQSPWLLALVTWGGVAFLLWYGFGALKTAMSSNLELASAEVMKQGRWKIIATMLAVTWLNPHVYLDTFVVLGSLGGQLAMEPKRWFALGTISASFLWFFGLALLAAWLAPRLRTAKAQRIINILVGVVMWLIAFQLAREGVAHMHALFN.

Helical transmembrane passes span 1-21 (MISYYFQGFALGAAMILPLGP), 37-57 (LMIALLCALSDLVLISAGIFG), 68-88 (LLALVTWGGVAFLLWYGFGAL), 111-131 (IIATMLAVTWLNPHVYLDTFV), 147-167 (WFALGTISASFLWFFGLALLA), and 179-199 (AQRIINILVGVVMWLIAFQLA).

It belongs to the LysE/ArgO transporter (TC 2.A.75) family.

It localises to the cell inner membrane. It catalyses the reaction L-arginine(in) = L-arginine(out). Involved in the export of arginine. Important to control the intracellular level of arginine and the correct balance between arginine and lysine. This chain is Arginine exporter protein ArgO, found in Salmonella typhimurium (strain LT2 / SGSC1412 / ATCC 700720).